A 394-amino-acid polypeptide reads, in one-letter code: Acetyl-CoA acetyltransferase (394 aa).

Residue C88 is the Acyl-thioester intermediate of the active site. Catalysis depends on proton acceptor residues H349 and C379.

Belongs to the thiolase-like superfamily. Thiolase family.

Its subcellular location is the cytoplasm. The catalysed reaction is 2 acetyl-CoA = acetoacetyl-CoA + CoA. It participates in metabolic intermediate biosynthesis; (R)-mevalonate biosynthesis; (R)-mevalonate from acetyl-CoA: step 1/3. The polypeptide is Acetyl-CoA acetyltransferase (atoB) (Escherichia coli (strain K12)).